Here is a 113-residue protein sequence, read N- to C-terminus: MAGYRKLGRPTDQRKAMLRNLVTSFLKHGKIETTETRAKETRSIAEKMITLAKRGDLHARRQVLSFVTEEAVVQRLFEEIAPKYAERNGGYTRIYKVGPRRGDGAEVVILELV.

This sequence belongs to the bacterial ribosomal protein bL17 family. As to quaternary structure, part of the 50S ribosomal subunit. Contacts protein L32.

This chain is Large ribosomal subunit protein bL17, found in Clostridium botulinum (strain Loch Maree / Type A3).